We begin with the raw amino-acid sequence, 213 residues long: EEF1A lysine methyltransferase 1 (213 aa).

It belongs to the class I-like SAM-binding methyltransferase superfamily. EFM5 family.

It localises to the cytoplasm. The catalysed reaction is L-lysyl-[protein] + 3 S-adenosyl-L-methionine = N(6),N(6),N(6)-trimethyl-L-lysyl-[protein] + 3 S-adenosyl-L-homocysteine + 3 H(+). In terms of biological role, protein-lysine methyltransferase that selectively catalyzes the trimethylation of EEF1A at 'Lys-79'. In Gallus gallus (Chicken), this protein is EEF1A lysine methyltransferase 1.